The following is a 207-amino-acid chain: Holliday junction resolvase RecU (207 aa).

The disordered stretch occupies residues 1 to 30 (MPIRYPNGQPYSRSPKQGQAKKPLPADTYS). 4 residues coordinate Mg(2+): Thr87, Asp89, Glu102, and Gln121.

It belongs to the RecU family. Requires Mg(2+) as cofactor.

The protein localises to the cytoplasm. It catalyses the reaction Endonucleolytic cleavage at a junction such as a reciprocal single-stranded crossover between two homologous DNA duplexes (Holliday junction).. In terms of biological role, endonuclease that resolves Holliday junction intermediates in genetic recombination. Cleaves mobile four-strand junctions by introducing symmetrical nicks in paired strands. Promotes annealing of linear ssDNA with homologous dsDNA. Required for DNA repair, homologous recombination and chromosome segregation. The polypeptide is Holliday junction resolvase RecU (Shouchella clausii (strain KSM-K16) (Alkalihalobacillus clausii)).